A 206-amino-acid polypeptide reads, in one-letter code: MTKLSKRQLDILTFIKEEVKSKGYPPSVREIGEAVGLASSSTVHGHLARLETKGLIRRDPTKPRAIEVLDEEELNIPKSAVMNVPVIGKVTAGLPITAVENVEEYFPLPETFAAPDEQVFMLEIMGESMIDAGILDKDYVIVRQQSTANNGDIVVAMTEEDEATVKRFYKEDTHFRLQPENPSMEPIILQNVSILGKVIGVFRNIH.

Residues 28–48 (VREIGEAVGLASSSTVHGHLA) constitute a DNA-binding region (H-T-H motif). Catalysis depends on for autocatalytic cleavage activity residues Ser128 and Lys166.

It belongs to the peptidase S24 family. As to quaternary structure, homodimer.

It carries out the reaction Hydrolysis of Ala-|-Gly bond in repressor LexA.. Functionally, represses a number of genes involved in the response to DNA damage (SOS response), including recA and lexA. In the presence of single-stranded DNA, RecA interacts with LexA causing an autocatalytic cleavage which disrupts the DNA-binding part of LexA, leading to derepression of the SOS regulon and eventually DNA repair. This chain is LexA repressor, found in Bacillus pumilus (strain SAFR-032).